Consider the following 120-residue polypeptide: NAD(P)H-quinone oxidoreductase subunit 3, chloroplastic (120 aa).

Helical transmembrane passes span 9-29 (IFWA…LISG), 64-84 (MFAL…PWAM), and 88-108 (VLGV…IVGS).

Belongs to the complex I subunit 3 family. NDH is composed of at least 16 different subunits, 5 of which are encoded in the nucleus.

Its subcellular location is the plastid. The protein resides in the chloroplast thylakoid membrane. The enzyme catalyses a plastoquinone + NADH + (n+1) H(+)(in) = a plastoquinol + NAD(+) + n H(+)(out). It catalyses the reaction a plastoquinone + NADPH + (n+1) H(+)(in) = a plastoquinol + NADP(+) + n H(+)(out). In terms of biological role, NDH shuttles electrons from NAD(P)H:plastoquinone, via FMN and iron-sulfur (Fe-S) centers, to quinones in the photosynthetic chain and possibly in a chloroplast respiratory chain. The immediate electron acceptor for the enzyme in this species is believed to be plastoquinone. Couples the redox reaction to proton translocation, and thus conserves the redox energy in a proton gradient. This is NAD(P)H-quinone oxidoreductase subunit 3, chloroplastic from Platanus occidentalis (Sycamore).